Consider the following 244-residue polypeptide: 3-deoxy-manno-octulosonate cytidylyltransferase (244 aa).

This sequence belongs to the KdsB family.

It localises to the cytoplasm. The catalysed reaction is 3-deoxy-alpha-D-manno-oct-2-ulosonate + CTP = CMP-3-deoxy-beta-D-manno-octulosonate + diphosphate. It functions in the pathway nucleotide-sugar biosynthesis; CMP-3-deoxy-D-manno-octulosonate biosynthesis; CMP-3-deoxy-D-manno-octulosonate from 3-deoxy-D-manno-octulosonate and CTP: step 1/1. The protein operates within bacterial outer membrane biogenesis; lipopolysaccharide biosynthesis. Functionally, activates KDO (a required 8-carbon sugar) for incorporation into bacterial lipopolysaccharide in Gram-negative bacteria. This Rickettsia bellii (strain OSU 85-389) protein is 3-deoxy-manno-octulosonate cytidylyltransferase.